The following is a 331-amino-acid chain: Ornithine carbamoyltransferase (331 aa).

Carbamoyl phosphate is bound by residues 57-60 (STRT), Gln82, Arg106, and 133-136 (HPTQ). Residues Asn166, Asp230, and 234-235 (SM) contribute to the L-ornithine site. Residues 272-273 (CL) and Arg317 contribute to the carbamoyl phosphate site.

It belongs to the aspartate/ornithine carbamoyltransferase superfamily. OTCase family.

It is found in the cytoplasm. The catalysed reaction is carbamoyl phosphate + L-ornithine = L-citrulline + phosphate + H(+). Its pathway is amino-acid degradation; L-arginine degradation via ADI pathway; carbamoyl phosphate from L-arginine: step 2/2. Its function is as follows. Reversibly catalyzes the transfer of the carbamoyl group from carbamoyl phosphate (CP) to the N(epsilon) atom of ornithine (ORN) to produce L-citrulline. The protein is Ornithine carbamoyltransferase of Clostridium perfringens (strain SM101 / Type A).